Reading from the N-terminus, the 224-residue chain is Protein GrpE (224 aa).

Composition is skewed to polar residues over residues 1 to 16 (MSGD…NVES) and 209 to 224 (ESSS…EGDA). Disordered stretches follow at residues 1–35 (MSGD…DPVV) and 203–224 (SMGP…EGDA).

It belongs to the GrpE family. In terms of assembly, homodimer.

It is found in the cytoplasm. In terms of biological role, participates actively in the response to hyperosmotic and heat shock by preventing the aggregation of stress-denatured proteins, in association with DnaK and GrpE. It is the nucleotide exchange factor for DnaK and may function as a thermosensor. Unfolded proteins bind initially to DnaJ; upon interaction with the DnaJ-bound protein, DnaK hydrolyzes its bound ATP, resulting in the formation of a stable complex. GrpE releases ADP from DnaK; ATP binding to DnaK triggers the release of the substrate protein, thus completing the reaction cycle. Several rounds of ATP-dependent interactions between DnaJ, DnaK and GrpE are required for fully efficient folding. In Synechococcus sp. (strain CC9902), this protein is Protein GrpE.